Reading from the N-terminus, the 332-residue chain is Holliday junction branch migration complex subunit RuvB (332 aa).

The large ATPase domain (RuvB-L) stretch occupies residues 1–181 (MSRILDNELM…FGITGHMEYY (181 aa)). Residues Leu20, Arg21, Gly62, Lys65, Thr66, Thr67, 128–130 (EDF), Arg171, Tyr181, and Arg218 each bind ATP. Position 66 (Thr66) interacts with Mg(2+). Positions 182-252 (EAGDLTEIVE…ITDQALSMLD (71 aa)) are small ATPAse domain (RuvB-S). The segment at 255 to 332 (QEGLDYVDQK…EHLGYEYMKE (78 aa)) is head domain (RuvB-H). Arg291, Arg310, Arg312, and Arg315 together coordinate DNA.

This sequence belongs to the RuvB family. In terms of assembly, homohexamer. Forms an RuvA(8)-RuvB(12)-Holliday junction (HJ) complex. HJ DNA is sandwiched between 2 RuvA tetramers; dsDNA enters through RuvA and exits via RuvB. An RuvB hexamer assembles on each DNA strand where it exits the tetramer. Each RuvB hexamer is contacted by two RuvA subunits (via domain III) on 2 adjacent RuvB subunits; this complex drives branch migration. In the full resolvosome a probable DNA-RuvA(4)-RuvB(12)-RuvC(2) complex forms which resolves the HJ.

Its subcellular location is the cytoplasm. It carries out the reaction ATP + H2O = ADP + phosphate + H(+). Functionally, the RuvA-RuvB-RuvC complex processes Holliday junction (HJ) DNA during genetic recombination and DNA repair, while the RuvA-RuvB complex plays an important role in the rescue of blocked DNA replication forks via replication fork reversal (RFR). RuvA specifically binds to HJ cruciform DNA, conferring on it an open structure. The RuvB hexamer acts as an ATP-dependent pump, pulling dsDNA into and through the RuvAB complex. RuvB forms 2 homohexamers on either side of HJ DNA bound by 1 or 2 RuvA tetramers; 4 subunits per hexamer contact DNA at a time. Coordinated motions by a converter formed by DNA-disengaged RuvB subunits stimulates ATP hydrolysis and nucleotide exchange. Immobilization of the converter enables RuvB to convert the ATP-contained energy into a lever motion, pulling 2 nucleotides of DNA out of the RuvA tetramer per ATP hydrolyzed, thus driving DNA branch migration. The RuvB motors rotate together with the DNA substrate, which together with the progressing nucleotide cycle form the mechanistic basis for DNA recombination by continuous HJ branch migration. Branch migration allows RuvC to scan DNA until it finds its consensus sequence, where it cleaves and resolves cruciform DNA. The polypeptide is Holliday junction branch migration complex subunit RuvB (Streptococcus sanguinis (strain SK36)).